The chain runs to 396 residues: MTTNTVSRKVAWLRVVTLAVAAFIFNTTEFVPVGLLSDIAQSFHMQTAQVGIMLTIYAWVVALMSLPFMLMTSQVERRKLLICLFVVFIASHVLSFLSWSFTVLVISRIGVAFAHAIFWSITASLAIRMAPAGKRAQALSLIATGTALAMVLGLPLGRIVGQYFGWRMTFFAIGIGALITLLCLIKLLPLLPSEHSGSLKSLPLLFRRPALMSIYLLTVVVVTAHYTAYSYIEPFVQNIAGFSANFATALLLLLGGAGIIGSVIFGKLGNQYASALVSTAIALLLVCLALLLPAANSEIHLGVLSIFWGIAMMIIGLGMQVKVLALAPDATDVAMALFSGIFNIGIGAGALVGNQVSLHWSMSMIGYVGTVPAFAALIWSIIIFRRWPVTLEEQTQ.

At 1-14 (MTTNTVSRKVAWLR) the chain is on the cytoplasmic side. Residues 15–35 (VVTLAVAAFIFNTTEFVPVGL) form a helical membrane-spanning segment. At 36-49 (LSDIAQSFHMQTAQ) the chain is on the periplasmic side. Residues 50–70 (VGIMLTIYAWVVALMSLPFML) traverse the membrane as a helical segment. Residues 71 to 80 (MTSQVERRKL) lie on the Cytoplasmic side of the membrane. Residues 81-101 (LICLFVVFIASHVLSFLSWSF) traverse the membrane as a helical segment. Position 102 (Thr102) is a topological domain, periplasmic. The chain crosses the membrane as a helical span at residues 103–123 (VLVISRIGVAFAHAIFWSITA). The Cytoplasmic portion of the chain corresponds to 124 to 135 (SLAIRMAPAGKR). Residues 136 to 156 (AQALSLIATGTALAMVLGLPL) traverse the membrane as a helical segment. Over 157-169 (GRIVGQYFGWRMT) the chain is Periplasmic. Residues 170–190 (FFAIGIGALITLLCLIKLLPL) traverse the membrane as a helical segment. Residues 191–208 (LPSEHSGSLKSLPLLFRR) lie on the Cytoplasmic side of the membrane. The chain crosses the membrane as a helical span at residues 209 to 229 (PALMSIYLLTVVVVTAHYTAY). At 230 to 245 (SYIEPFVQNIAGFSAN) the chain is on the periplasmic side. A helical transmembrane segment spans residues 246–266 (FATALLLLLGGAGIIGSVIFG). Residues 267–274 (KLGNQYAS) lie on the Cytoplasmic side of the membrane. The chain crosses the membrane as a helical span at residues 275–295 (ALVSTAIALLLVCLALLLPAA). The Periplasmic segment spans residues 296–298 (NSE). A helical transmembrane segment spans residues 299–319 (IHLGVLSIFWGIAMMIIGLGM). Topologically, residues 320 to 332 (QVKVLALAPDATD) are cytoplasmic. Residues 333 to 353 (VAMALFSGIFNIGIGAGALVG) traverse the membrane as a helical segment. At 354 to 363 (NQVSLHWSMS) the chain is on the periplasmic side. The chain crosses the membrane as a helical span at residues 364 to 384 (MIGYVGTVPAFAALIWSIIIF). Over 385–396 (RRWPVTLEEQTQ) the chain is Cytoplasmic.

Belongs to the major facilitator superfamily. SotB (TC 2.A.1.2) family.

It localises to the cell inner membrane. In terms of biological role, involved in the efflux of sugars. The physiological role may be the reduction of the intracellular concentration of toxic sugars or sugar metabolites. The protein is Probable sugar efflux transporter of Escherichia coli O157:H7.